The chain runs to 223 residues: Glutathione S-transferase alpha I (223 aa).

The residue at position 1 (M1) is an N-acetylmethionine. At A2 the chain carries N-acetylalanine; in Glutathione S-transferase alpha I, N-terminally processed. Residues 3 to 83 (RKPLLHYFNG…YVANKHNLYG (81 aa)) enclose the GST N-terminal domain. Residue K4 is modified to N6-succinyllysine. Glutathione contacts are provided by residues Y9, R45, 54–55 (QV), and 67–68 (QT). Residues 85-208 (DMKERALIDM…QPGSQRKPPM (124 aa)) enclose the GST C-terminal domain.

The protein belongs to the GST superfamily. Alpha family. In terms of assembly, homodimer or heterodimer of GSTA1 and GSTA2. As to expression, liver and lung.

The protein localises to the cytoplasm. It catalyses the reaction RX + glutathione = an S-substituted glutathione + a halide anion + H(+). The catalysed reaction is prostaglandin A2 + glutathione = prostaglandin A2-S-(R)-glutathione. The enzyme catalyses prostaglandin J2 + glutathione = prostaglandin J2-S-(R)-glutathione. It carries out the reaction (13S)-hydroperoxy-(9Z,11E)-octadecadienoate + 2 glutathione = (13S)-hydroxy-(9Z,11E)-octadecadienoate + glutathione disulfide + H2O. It catalyses the reaction androst-5-ene-3,17-dione = androst-4-ene-3,17-dione. Its function is as follows. Glutathione S-transferase that catalyzes the nucleophilic attack of the sulfur atom of glutathione on the electrophilic groups of a wide range of exogenous and endogenous compounds. Involved in the formation of glutathione conjugates of both prostaglandin A2 (PGA2) and prostaglandin J2 (PGJ2). It also catalyzes the isomerization of D5-androstene-3,17-dione (AD) into D4-androstene-3,17-dione and may therefore play an important role in hormone biosynthesis. Through its glutathione-dependent peroxidase activity toward the fatty acid hydroperoxide (13S)-hydroperoxy-(9Z,11E)-octadecadienoate/13-HPODE it is also involved in the metabolism of oxidized linoleic acid. This Oryctolagus cuniculus (Rabbit) protein is Glutathione S-transferase alpha I.